The primary structure comprises 269 residues: Phosphonoacetaldehyde hydrolase (269 aa).

D10 (nucleophile) is an active-site residue. Positions 10 and 12 each coordinate Mg(2+). Catalysis depends on K52, which acts as the Schiff-base intermediate with substrate. Residue D186 participates in Mg(2+) binding.

This sequence belongs to the HAD-like hydrolase superfamily. PhnX family. Homodimer. Mg(2+) serves as cofactor.

It carries out the reaction phosphonoacetaldehyde + H2O = acetaldehyde + phosphate + H(+). Its function is as follows. Involved in phosphonate degradation. This Klebsiella pneumoniae subsp. pneumoniae (strain ATCC 700721 / MGH 78578) protein is Phosphonoacetaldehyde hydrolase.